Here is a 222-residue protein sequence, read N- to C-terminus: Latexin (222 aa).

In terms of domain architecture, Cystatin LXN-type 1 spans 1–97 (MEIPPTNYPA…NFTFEGETGK (97 aa)). Residue lysine 55 is modified to N6-acetyllysine. An alpha-helical linker region spans residues 98–117 (NPDEEDNTFYQRLKSMKEPL). One can recognise a Cystatin LXN-type 2 domain in the interval 118-222 (EAQNIPDNFG…SRLPKEVQLE (105 aa)).

The protein belongs to the protease inhibitor I47 (latexin) family. Highly expressed in heart, prostate, ovary, kidney, pancreas, and colon, moderate or low in other tissues including brain.

The protein localises to the cytoplasm. Its function is as follows. Hardly reversible, non-competitive, and potent inhibitor of CPA1, CPA2 and CPA4. May play a role in inflammation. This is Latexin (LXN) from Homo sapiens (Human).